Reading from the N-terminus, the 298-residue chain is Porphobilinogen deaminase (298 aa).

C239 bears the S-(dipyrrolylmethanemethyl)cysteine mark.

This sequence belongs to the HMBS family. As to quaternary structure, monomer. Dipyrromethane serves as cofactor.

The enzyme catalyses 4 porphobilinogen + H2O = hydroxymethylbilane + 4 NH4(+). It participates in porphyrin-containing compound metabolism; protoporphyrin-IX biosynthesis; coproporphyrinogen-III from 5-aminolevulinate: step 2/4. Tetrapolymerization of the monopyrrole PBG into the hydroxymethylbilane pre-uroporphyrinogen in several discrete steps. The protein is Porphobilinogen deaminase of Ehrlichia chaffeensis (strain ATCC CRL-10679 / Arkansas).